The sequence spans 324 residues: Putative ribose-phosphate pyrophosphokinase 2 (324 aa).

Residues 43–45 (DGE) and 102–103 (RQ) contribute to the ATP site. His-136 provides a ligand contact to Mg(2+). Residues Asp-225 and 229 to 233 (NTGKT) each bind D-ribose 5-phosphate.

It belongs to the ribose-phosphate pyrophosphokinase family. Class I subfamily. In terms of assembly, homohexamer. Requires Mg(2+) as cofactor.

The protein localises to the cytoplasm. It catalyses the reaction D-ribose 5-phosphate + ATP = 5-phospho-alpha-D-ribose 1-diphosphate + AMP + H(+). It functions in the pathway metabolic intermediate biosynthesis; 5-phospho-alpha-D-ribose 1-diphosphate biosynthesis; 5-phospho-alpha-D-ribose 1-diphosphate from D-ribose 5-phosphate (route I): step 1/1. Functionally, involved in the biosynthesis of the central metabolite phospho-alpha-D-ribosyl-1-pyrophosphate (PRPP) via the transfer of pyrophosphoryl group from ATP to 1-hydroxyl of ribose-5-phosphate (Rib-5-P). This Streptococcus agalactiae serotype III (strain NEM316) protein is Putative ribose-phosphate pyrophosphokinase 2.